Reading from the N-terminus, the 480-residue chain is Probable serine/threonine-protein phosphatase 2A regulatory subunit B'' subunit TON2 (480 aa).

EF-hand domains lie at 186–221, 294–329, and 369–404; these read VSLTQARIDMSELDEDSDGFLHSDEMESYIGGLIPN, TSAQRICDMFLALDKDMSGSLCKQELKEYADGTLTE, and DTPEGLTYLFRCLDLQGRGFLTTADIHSLFRDVHQK. Positions 307, 309, 311, 313, and 318 each coordinate Ca(2+).

Interacts with PP2AA1. As to expression, widely expressed.

It is found in the cytoplasm. The protein localises to the cytoskeleton. Functionally, probable regulatory subunit of type 2A protein phosphatase involved in the control of the dynamic organization of the cortical cytoskeleton. Plays an important role in the organization of interphase microtubule arrays in part through the regulation of nucleation geometry. Required for the reorganization of cortical arrays in response to light. This Arabidopsis thaliana (Mouse-ear cress) protein is Probable serine/threonine-protein phosphatase 2A regulatory subunit B'' subunit TON2 (TON2).